The sequence spans 124 residues: Ribonuclease pancreatic (124 aa).

Positions 1–24 are disordered; sequence KESSAMKFQRQHMDSSGSPSTNAN. Residues Lys-7 and Arg-10 each contribute to the substrate site. His-12 (proton acceptor) is an active-site residue. Residues 14 to 24 are compositionally biased toward polar residues; it reads DSSGSPSTNAN. Disulfide bonds link Cys-26/Cys-84, Cys-40/Cys-95, Cys-58/Cys-110, and Cys-65/Cys-72. Asn-34 carries an N-linked (GlcNAc...) asparagine glycan. Residues 41–45, Lys-66, and Arg-85 contribute to the substrate site; that span reads KPVNT. The active-site Proton donor is the His-119.

This sequence belongs to the pancreatic ribonuclease family. Monomer. Interacts with and forms tight 1:1 complexes with RNH1. Dimerization of two such complexes may occur. Interaction with RNH1 inhibits this protein. As to expression, pancreas.

The protein localises to the secreted. It carries out the reaction an [RNA] containing cytidine + H2O = an [RNA]-3'-cytidine-3'-phosphate + a 5'-hydroxy-ribonucleotide-3'-[RNA].. It catalyses the reaction an [RNA] containing uridine + H2O = an [RNA]-3'-uridine-3'-phosphate + a 5'-hydroxy-ribonucleotide-3'-[RNA].. Its function is as follows. Endonuclease that catalyzes the cleavage of RNA on the 3' side of pyrimidine nucleotides. Acts on single-stranded and double-stranded RNA. The chain is Ribonuclease pancreatic (RNASE1) from Chinchilla chinchilla (Short-tailed chinchilla).